The chain runs to 147 residues: Secreted RxLR effector protein BLN04 (147 aa).

A signal peptide spans 1-23 (MATMRRICFLFVFNLAVATSTQG). Positions 58–61 (SEER) match the dEER motif. The chain crosses the membrane as a helical span at residues 117-137 (VYIYTILFLSIPIILGVAMYI).

It belongs to the RxLR effector family. As to quaternary structure, interacts with host transcription factor NAC069.

It localises to the secreted. It is found in the host membrane. Secreted effector that inhibits stress-induced relocalization of the transcription factor NAC069 to the nucleus, thus affecting its broad role in abiotic and biotic stress responses. The chain is Secreted RxLR effector protein BLN04 from Bremia lactucae (Lettuce downy mildew).